Here is a 6061-residue protein sequence, read N- to C-terminus: Intermembrane lipid transfer protein vps13B (6061 aa).

One can recognise a Chorein N-terminal domain in the interval 2 to 115 (FESLVADIIA…QLELKRKKLE (114 aa)). Disordered regions lie at residues 590–623 (PKYK…NNNK), 803–828 (DIKN…NNKN), 1386–1414 (QQQQ…NVSS), 1604–1644 (SSNN…GTLS), 2747–2784 (QTNQ…EDQE), 2950–2972 (GLNN…NSST), 3364–3401 (LNRN…DDDD), 3855–3876 (QQQQ…RNKK), 4011–4068 (QQQQ…FKNN), 4107–4132 (ELEK…RPDE), 4262–4297 (NSSN…YNGR), 4321–4442 (SQSI…TSPG), 4601–4631 (TSSP…KKSL), 4753–4797 (NNNN…TQEF), 4861–4882 (NAGG…SISQ), 5003–5030 (LATK…DGIE), and 5372–5429 (NINN…IGQD). Residues 595-614 (HQENKENKENQENQENENKN) are compositionally biased toward basic and acidic residues. Residues 1395–1406 (QQQKEEEQHGGE) are compositionally biased toward basic and acidic residues. The span at 2747–2756 (QTNQNNQKNR) shows a compositional bias: polar residues. The span at 2774–2784 (NDNDEYDEDQE) shows a compositional bias: acidic residues. Residues 3388 to 3401 (IDDDDGDGDDDDDD) show a composition bias toward acidic residues. Over residues 4015–4024 (QEKEKEIEKE) the composition is skewed to basic and acidic residues. Over residues 4031-4040 (LKNNNNISIN) the composition is skewed to low complexity. The span at 4041–4057 (DNDDDDDDDDNDNDENN) shows a compositional bias: acidic residues. Positions 4058 to 4068 (NENYEFNFKNN) are enriched in low complexity. The segment covering 4107–4120 (ELEKKKRERKENSK) has biased composition (basic and acidic residues). Low complexity-rich tracts occupy residues 4330-4383 (TTTT…VGSN) and 4399-4429 (NNNN…NNNN). Polar residues predominate over residues 4430–4441 (SNDNQVNFSTSP). 2 stretches are compositionally biased toward low complexity: residues 4601-4617 (TSSP…NYNN) and 4753-4784 (NNNN…SNEN). Residues 4785 to 4794 (SQDQPPSIKT) are compositionally biased toward polar residues. Composition is skewed to low complexity over residues 5013–5030 (DNSN…DGIE) and 5372–5384 (NINN…NNDN). Residues 5385-5409 (NKNKNNNDKNKNNDKNNKNNNDKNN) show a composition bias toward basic and acidic residues. The span at 5410–5421 (NDNNNNNNNNNN) shows a compositional bias: low complexity.

This sequence belongs to the VPS13 family.

It is found in the membrane. Functionally, mediates the transfer of lipids between membranes at organelle contact sites. In Dictyostelium discoideum (Social amoeba), this protein is Intermembrane lipid transfer protein vps13B (vps13B).